The chain runs to 503 residues: LEM domain-containing protein 2 (503 aa).

At Ala2 the chain carries N-acetylalanine. In terms of domain architecture, LEM spans 2–42 (AGLSDLELRRELQALGFQPGPITDTTRDVYRNKLRRLRGEA). Residues 42 to 74 (ARLRDEERLREEARPRGEERLREEARLREDAPL) are compositionally biased toward basic and acidic residues. Disordered regions lie at residues 42–97 (ARLR…SGSA) and 127–157 (AQLR…GPGL). The required for nuclear retention and interaction with LMNA isoform C stretch occupies residues 74 to 130 (LRARPAAASPRAEPWLSQPASGSAYATPGAYGDIRPSAASWVGSRGLAYPARPAQLR). The segment covering 75 to 87 (RARPAAASPRAEP) has biased composition (low complexity). Residues Ser166 and Ser175 each carry the phosphoserine modification. The interval 172 to 198 (LPSSLLGPDPRPGLRATRAGPAGAARA) is disordered. The segment covering 184–197 (GLRATRAGPAGAAR) has biased composition (low complexity). Helical transmembrane passes span 213–233 (LLLW…WVKM) and 377–397 (VTNV…LILL). Residues 395–503 (ILLKYRWRKL…KPSSFSDSER (109 aa)) form a winged-Helix (WH) region. A phosphoserine mark is found at Ser497, Ser499, and Ser501.

In terms of assembly, interacts (via N-terminus) with LMNA isoform C (via C-terminus) (in vitro). Interacts (via LEM domain) with BANF1. Interacts (via C-terminus) with CHMP7. Interacts (via N-terminus) with tubulin; the interaction causes microtubule bundling and stabilization (in vitro). In terms of processing, phosphorylated; strongly phosphorylated in mitosis compared to G1/S. In terms of tissue distribution, ubiquitously expressed, including bone marrow, brain, kidney, colon, skeletal muscle, thymus, testis and uterus.

It is found in the nucleus inner membrane. The protein localises to the nucleus envelope. The protein resides in the cytoplasm. It localises to the cytoskeleton. Its subcellular location is the spindle. Nuclear lamina-associated inner nuclear membrane protein that is involved in nuclear structure organization, maintenance of nuclear envelope (NE) integrity and NE reformation after mitosis. Plays a role as transmembrane adapter for the endosomal sorting complexes required for transport (ESCRT), and is thereby involved in ESCRT-mediated NE reformation. Promotes ESCRT-mediated NE closure by recruiting CHMP7 and downstream ESCRT-III proteins IST1/CHMP8 and CHMP2A to the reforming NE during anaphase. During nuclear reassembly, condenses into a liquid-like coating around microtubule spindles and coassembles with CHMP7 to form a macromolecular O-ring seal at the confluence between membranes, chromatin, and the spindle to facilitate early nuclear sealing. Plays a role in the organization of heterochromatin associated with the NE and in the maintenance of NE organization under mechanical stress. Required for embryonic development and involved in regulation of several signaling pathways such as MAPK and AKT. Required for myoblast differentiation involving regulation of ERK signaling. Essential for cardiac homeostasis and proper heart function. This is LEM domain-containing protein 2 (LEMD2) from Homo sapiens (Human).